The primary structure comprises 998 residues: RNA-directed RNA polymerase (998 aa).

The chain crosses the membrane as a helical span at residues 21-43 (IVIVSGCGAVAYCISKFWGYGAI). The interval 44 to 998 (APYPQSGGNR…AQPGAPTNPK (955 aa)) is cytoplasmic. The tract at residues 91–282 (NGHAVSGAVR…LVYTIPQHTV (192 aa)) is capping. Aspartate 692 (for RdRp/TNTase activity) is an active-site residue. The tract at residues 901-998 (AKQTRSNSGT…AQPGAPTNPK (98 aa)) is disordered. The span at 985-998 (PKAGAQPGAPTNPK) shows a compositional bias: low complexity.

Belongs to the nodaviridae RNA polymerase family. As to quaternary structure, homododecamer. Forms 2 stacked rings of 35-nm in diameter, arranged in a crown-like structure at the opening of virus-induced replication vesicles. Interacts with protein B2. Mn(2+) is required as a cofactor.

Its subcellular location is the host mitochondrion outer membrane. The enzyme catalyses RNA(n) + a ribonucleoside 5'-triphosphate = RNA(n+1) + diphosphate. RNA-dependent RNA polymerase, which replicates the viral genome composed of 2 RNA segments, RNA1 and RNA2. Does not need an exogenous primer. Also possesses a terminal nucleotidyl transferase (TNTase) activity. The TNTase catalyzes the addition of nucleotide to the 3'-end of plus- and minus-stranded RNAs, probably to repair the 3'-end nucleotide loss. Forms the open necked connection to the cytosol of the virus-induced replication vesicles. Mediates viral RNA1 recruitment. This Hepialidae (ghost moths) protein is RNA-directed RNA polymerase.